We begin with the raw amino-acid sequence, 1218 residues long: NACHT, LRR and PYD domains-containing protein 1 allele 2 (1218 aa).

A disordered region spans residues 1–61; that stretch reads MEESQSKQES…SLPGWSSTSK (61 aa). Polar residues predominate over residues 7–29; it reads KQESNTRVAQHGSQQDVDPTFQT. An NACHT domain is found at 175 to 484; that stretch reads QLVIIEGAAG…EFFAAMSYIL (310 aa). Position 181 to 188 (181 to 188) interacts with ATP; it reads GAAGIGKS. 3 LRR repeats span residues 343 to 364, 673 to 693, and 730 to 750; these read KERNTIIDFNLIGSIPVLLTLC, NLEELDLSGNPLSYSAVRSLC, and RLAELDLRLNDLGDNGVRQLC. Residues 799 to 815 show a composition bias toward polar residues; sequence TMPTENTDGEESLTSSK. Positions 799–842 are disordered; it reads TMPTENTDGEESLTSSKQQQQQSGDKHMEPLGTDDDFWGPSGPV. The interval 835-968 is ZU5; it reads FWGPSGPVST…HFAVLENPSF (134 aa). In terms of domain architecture, FIIND spans 835-1118; sequence FWGPSGPVST…LRPALPRMAS (284 aa). Residues 969–1118 are UPA; that stretch reads SPMGVLLRMI…LRPALPRMAS (150 aa). In terms of domain architecture, CARD spans 1122–1211; the sequence is DAPALLHFVD…HLIMDLLEKS (90 aa).

This sequence belongs to the NLRP family. In terms of assembly, interacts (via LRR repeats) with BCL2 and BCL2L1 (via the loop between motifs BH4 and BH3). Interacts with NOD2; this interaction is enhanced in the presence of muramyl dipeptide (MDP) and increases IL1B release. Interacts with EIF2AK2/PKR; this interaction requires EIF2AK2 activity, is accompanied by EIF2AK2 autophosphorylation and promotes inflammasome assembly in response to danger-associated signals. Interacts with MEFV; this interaction targets Nlrp1a to degradation by autophagy, hence preventing excessive IL1B- and IL18-mediated inflammation. Interacts with DPP9; leading to inhibit activation of the inflammasome. DPP9 acts via formation of a ternary complex, composed of a DPP9 homodimer, one full-length NLRP1 protein, and one cleaved C-terminus of Nlrp1a (NACHT, LRR and PYD domains-containing protein 1a, C-terminus). Interacts with DPP8; leading to inhibit activation of the inflammasome, probably via formation of a ternary complex with DPP8. As to quaternary structure, interacts with the C-terminal part of Nlrp1a (NACHT, LRR and PYD domains-containing protein 1a, C-terminus) in absence of pathogens and other damage-associated signals. Interacts with the N-terminal part of Nlrp1a (NACHT, LRR and PYD domains-containing protein 1a, N-terminus) in absence of pathogens and other damage-associated signals. Homomultimer; forms the Nlrp1a inflammasome polymeric complex, a filament composed of homopolymers of this form in response to pathogens and other damage-associated signals. The Nlrp1a inflammasome polymeric complex directly recruits pro-caspase-1 (proCASP1) independently of PYCARD/ASC. Interacts (via CARD domain) with CASP1 (via CARD domain); leading to CASP1 activation. In terms of processing, autocatalytically cleaved. Autocatalytic cleavage in FIIND region occurs constitutively, prior to activation signals, and is required for inflammasome activity (IL1B release), possibly by facilitating CASP1 binding. Both N- and C-terminal parts remain associated non-covalently. Post-translationally, (Microbial infection) Cleavage by B.anthracis lethal toxin (LT) endopeptidase promotes ubiquitination and degradation of the N-terminal part, releasing the cleaved C-terminal part of the protein (NACHT, LRR and PYD domains-containing protein 1a, C-terminus), which polymerizes and forms the Nlrp1a inflammasome. Ubiquitinated in response to pathogen-associated signals, leading to its degradation by the proteasome and subsequent release of the cleaved C-terminal part of the protein (NACHT, LRR and PYD domains-containing protein 1a, C-terminus), which polymerizes and forms the Nlrp1a inflammasome.

The protein localises to the cytoplasm. It is found in the cytosol. The protein resides in the nucleus. It localises to the inflammasome. With respect to regulation, activated by cleavage by B.anthracis lethal toxin (LT) endopeptidase. Cleavage by LT promotes ubiquitination and degradation of the N-terminal part, releasing the cleaved C-terminal part of the protein (NACHT, LRR and PYD domains-containing protein 1a, C-terminus), which polymerizes and forms the Nlrp1a inflammasome. Nlrp1a inflammasome is inhibited by DPP8 and DPP9, which sequester the C-terminal fragment of Nlrp1a (NACHT, LRR and PYD domains-containing protein 1a, C-terminus) in a ternary complex, thereby preventing Nlrp1a oligomerization and activation. Nlrp1a inflammasome is weakly activated by Val-boroPro (Talabostat, PT-100), an inhibitor of dipeptidyl peptidases DPP8 and DPP9. Val-boroPro relieves inhibition of DPP8 and/or DPP9 by promoting disruption of the ternary complex, releasing its C-terminal part from autoinhibition. Weakly activated by Toxoplasma gondii. In terms of biological role, acts as the sensor component of the Nlrp1a inflammasome, which mediates inflammasome activation in response to various pathogen-associated signals, leading to subsequent pyroptosis. Inflammasomes are supramolecular complexes that assemble in the cytosol in response to pathogens and other damage-associated signals and play critical roles in innate immunity and inflammation. Acts as a recognition receptor (PRR): recognizes specific pathogens and other damage-associated signals, such as B.anthracis lethal toxin (LT) or Val-boroPro inhibitor, and mediates the formation of the inflammasome polymeric complex. In response to pathogen-associated signals, the N-terminal part of Nlrp1a is degraded by the proteasome, releasing the cleaved C-terminal part of the protein (NACHT, LRR and PYD domains-containing protein 1a, C-terminus), which polymerizes to initiate the formation of the inflammasome complex: the inflammasome directly recruits pro-caspase-1 (proCASP1) independently of PYCARD/ASC and promotes caspase-1 (CASP1) activation, which subsequently cleaves and activates inflammatory cytokines IL1B and IL18 and gasdermin-D (GSDMD), leading to pyroptosis. In the absence of GSDMD expression, the Nlrp1a inflammasome is able to recruit and activate CASP8, leading to activation of gasdermin-E (GSDME). Its function is as follows. Constitutes the precursor of the Nlrp1a inflammasome, which mediates autoproteolytic processing within the FIIND domain to generate the N-terminal and C-terminal parts, which are associated non-covalently in absence of pathogens and other damage-associated signals. Regulatory part that prevents formation of the Nlrp1a inflammasome: in absence of pathogens and other damage-associated signals, interacts with the C-terminal part of Nlrp1a (NACHT, LRR and PYD domains-containing protein 1a, C-terminus), preventing activation of the Nlrp1a inflammasome. In response to pathogen-associated signals, this part is ubiquitinated by the N-end rule pathway and degraded by the proteasome, releasing the cleaved C-terminal part of the protein, which polymerizes and forms the Nlrp1a inflammasome. Functionally, constitutes the active part of the Nlrp1a inflammasome. In absence of pathogens and other damage-associated signals, interacts with the N-terminal part of Nlrp1a (NACHT, LRR and PYD domains-containing protein 1a, N-terminus), preventing activation of the Nlrp1a inflammasome. In response to pathogen-associated signals, the N-terminal part of Nlrp1a is degraded by the proteasome, releasing this form, which polymerizes to form the Nlrp1a inflammasome complex: the Nlrp1a inflammasome complex then directly recruits pro-caspase-1 (proCASP1) and promotes caspase-1 (CASP1) activation, leading to gasdermin-D (GSDMD) cleavage and subsequent pyroptosis. The protein is NACHT, LRR and PYD domains-containing protein 1 allele 2 of Rattus norvegicus (Rat).